The chain runs to 107 residues: uncharacterized protein (107 aa).

This is an uncharacterized protein from Saccharomyces cerevisiae (strain ATCC 204508 / S288c) (Baker's yeast).